The following is a 414-amino-acid chain: Snake venom metalloproteinase atrolysin-B (414 aa).

A signal peptide spans Met-1–Ser-20. Positions Ile-21–Asp-190 are excised as a propeptide. Gln-191 is modified (pyrrolidone carboxylic acid). Positions Arg-197–Pro-393 constitute a Peptidase M12B domain. Ca(2+) is bound by residues Glu-200 and Asp-284. 2 cysteine pairs are disulfide-bonded: Cys-308/Cys-388 and Cys-348/Cys-355. His-333 provides a ligand contact to Zn(2+). Glu-334 is an active-site residue. Residues His-337 and His-343 each contribute to the Zn(2+) site. Ca(2+)-binding residues include Cys-388, Asn-391, Val-403, Asn-406, Leu-408, Glu-410, and Glu-413. A propeptide spanning residues Leu-394 to Glu-414 is cleaved from the precursor.

This sequence belongs to the venom metalloproteinase (M12B) family. P-I subfamily. In terms of assembly, monomer. The cofactor is Zn(2+). In terms of processing, the N-terminus is blocked. Expressed by the venom gland.

The protein resides in the secreted. The enzyme catalyses Cleavage of 5-His-|-Leu-6, 10-His-|-Leu-11, 14-Ala-|-Leu-15, 16-Tyr-|-Leu-17 and 23-Gly-|-Phe-24 of insulin B chain. Identical to the cleavage of insulin B chain by atrolysin C. Also cleaves Xaa-|-Ser bonds in glucagon.. Snake venom metalloproteinase that impairs hemostasis in the envenomed animal. The polypeptide is Snake venom metalloproteinase atrolysin-B (Crotalus atrox (Western diamondback rattlesnake)).